The following is a 171-amino-acid chain: NADH-quinone oxidoreductase subunit I (171 aa).

2 4Fe-4S ferredoxin-type domains span residues 41–71 and 81–110; these read LTRD…VVKT and ESFT…LTPD. Positions 51, 54, 57, 61, 90, 93, 96, and 100 each coordinate [4Fe-4S] cluster.

It belongs to the complex I 23 kDa subunit family. In terms of assembly, NDH-1 is composed of 13 different subunits. Subunits NuoA, H, J, K, L, M, N constitute the membrane sector of the complex. Requires [4Fe-4S] cluster as cofactor.

The protein resides in the cell inner membrane. The enzyme catalyses a quinone + NADH + 5 H(+)(in) = a quinol + NAD(+) + 4 H(+)(out). NDH-1 shuttles electrons from NADH, via FMN and iron-sulfur (Fe-S) centers, to quinones in the respiratory chain. The immediate electron acceptor for the enzyme in this species is believed to be ubiquinone. Couples the redox reaction to proton translocation (for every two electrons transferred, four hydrogen ions are translocated across the cytoplasmic membrane), and thus conserves the redox energy in a proton gradient. The polypeptide is NADH-quinone oxidoreductase subunit I (Shewanella woodyi (strain ATCC 51908 / MS32)).